Consider the following 274-residue polypeptide: Rhamnulose-1-phosphate aldolase (274 aa).

Glu-117 is a catalytic residue. Residues His-141, His-143, and His-212 each contribute to the Zn(2+) site.

This sequence belongs to the aldolase class II family. RhaD subfamily. In terms of assembly, homotetramer. Zn(2+) serves as cofactor.

Its subcellular location is the cytoplasm. It carries out the reaction L-rhamnulose 1-phosphate = (S)-lactaldehyde + dihydroxyacetone phosphate. Its pathway is carbohydrate degradation; L-rhamnose degradation; glycerone phosphate from L-rhamnose: step 3/3. Catalyzes the reversible cleavage of L-rhamnulose-1-phosphate to dihydroxyacetone phosphate (DHAP) and L-lactaldehyde. The polypeptide is Rhamnulose-1-phosphate aldolase (Shigella boydii serotype 4 (strain Sb227)).